Here is a 319-residue protein sequence, read N- to C-terminus: HTH-type transcriptional regulator YidZ (319 aa).

Positions 8–65 constitute an HTH lysR-type domain; it reads LDLNLLLCLQLLMQERSVTKAAKRMNVTPSAVSKSLAKLRAWFDDPLFVNTPLGLAPT. Positions 25–44 form a DNA-binding region, H-T-H motif; sequence VTKAAKRMNVTPSAVSKSLA.

This sequence belongs to the LysR transcriptional regulatory family.

Involved in anaerobic NO protection. The sequence is that of HTH-type transcriptional regulator YidZ from Salmonella agona (strain SL483).